A 246-amino-acid chain; its full sequence is Alpha-amylase inhibitor 1 (246 aa).

The signal sequence occupies residues 1-23 (MIMASSKLLSLALFLALLSHANS). N-linked (GlcNAc...) asparagine glycans are attached at residues N35, N88, and N163. A propeptide spanning residues 240–246 (IVLNKIL) is cleaved from the precursor.

This sequence belongs to the leguminous lectin family. In terms of assembly, heterodimer of chain 1 and chain 2. In terms of processing, proteolytic processing yields active form.

In terms of biological role, lectin and alpha-amylase inhibitor. Acts as a defensive protein against insects. The chain is Alpha-amylase inhibitor 1 (LLP) from Phaseolus vulgaris (Kidney bean).